The chain runs to 356 residues: Phosphate acyltransferase (356 aa).

It belongs to the PlsX family. Homodimer. Probably interacts with PlsY.

It localises to the cytoplasm. It catalyses the reaction a fatty acyl-[ACP] + phosphate = an acyl phosphate + holo-[ACP]. It functions in the pathway lipid metabolism; phospholipid metabolism. Functionally, catalyzes the reversible formation of acyl-phosphate (acyl-PO(4)) from acyl-[acyl-carrier-protein] (acyl-ACP). This enzyme utilizes acyl-ACP as fatty acyl donor, but not acyl-CoA. The chain is Phosphate acyltransferase from Bartonella henselae (strain ATCC 49882 / DSM 28221 / CCUG 30454 / Houston 1) (Rochalimaea henselae).